The following is a 405-amino-acid chain: UDP-N-acetylglucosamine--N-acetylmuramyl-(pentapeptide) pyrophosphoryl-undecaprenol N-acetylglucosamine transferase (405 aa).

Residues 11–13 (TGG), asparagine 127, arginine 168, serine 191, isoleucine 248, and glutamine 293 contribute to the UDP-N-acetyl-alpha-D-glucosamine site.

The protein belongs to the glycosyltransferase 28 family. MurG subfamily.

The protein localises to the cell inner membrane. The catalysed reaction is di-trans,octa-cis-undecaprenyl diphospho-N-acetyl-alpha-D-muramoyl-L-alanyl-D-glutamyl-meso-2,6-diaminopimeloyl-D-alanyl-D-alanine + UDP-N-acetyl-alpha-D-glucosamine = di-trans,octa-cis-undecaprenyl diphospho-[N-acetyl-alpha-D-glucosaminyl-(1-&gt;4)]-N-acetyl-alpha-D-muramoyl-L-alanyl-D-glutamyl-meso-2,6-diaminopimeloyl-D-alanyl-D-alanine + UDP + H(+). Its pathway is cell wall biogenesis; peptidoglycan biosynthesis. Its function is as follows. Cell wall formation. Catalyzes the transfer of a GlcNAc subunit on undecaprenyl-pyrophosphoryl-MurNAc-pentapeptide (lipid intermediate I) to form undecaprenyl-pyrophosphoryl-MurNAc-(pentapeptide)GlcNAc (lipid intermediate II). In Sorangium cellulosum (strain So ce56) (Polyangium cellulosum (strain So ce56)), this protein is UDP-N-acetylglucosamine--N-acetylmuramyl-(pentapeptide) pyrophosphoryl-undecaprenol N-acetylglucosamine transferase.